Reading from the N-terminus, the 507-residue chain is WD repeat-containing protein fzy-1 (507 aa).

2 disordered regions span residues 1–39 (MNNK…NTNL) and 74–95 (NKEN…SVEG). Composition is skewed to polar residues over residues 15 to 24 (VRSSAQQNGL) and 74 to 86 (NKEN…SEPN). WD repeat units follow at residues 219–258 (TNEG…TTEY), 313–352 (GHCR…GSTV), 364–406 (EHTG…QKVR), and 411–450 (CETG…KLSH).

The protein belongs to the WD repeat CDC20/Fizzy family.

It localises to the chromosome. Its subcellular location is the cytoplasm. Plays a role in metaphase-anaphase transition during meiosis I. Required for embryonic anterior-posterior axis formation. This chain is WD repeat-containing protein fzy-1, found in Caenorhabditis elegans.